Reading from the N-terminus, the 195-residue chain is Imidazoleglycerol-phosphate dehydratase (195 aa).

It belongs to the imidazoleglycerol-phosphate dehydratase family.

The protein localises to the cytoplasm. The enzyme catalyses D-erythro-1-(imidazol-4-yl)glycerol 3-phosphate = 3-(imidazol-4-yl)-2-oxopropyl phosphate + H2O. It functions in the pathway amino-acid biosynthesis; L-histidine biosynthesis; L-histidine from 5-phospho-alpha-D-ribose 1-diphosphate: step 6/9. The polypeptide is Imidazoleglycerol-phosphate dehydratase (Koribacter versatilis (strain Ellin345)).